The following is a 520-amino-acid chain: MTKRLSPHEKKNRKPASRACVFCHEKHLQCSNERPCKNCVKRGLAHECRDVIRKRAKYLNTNSRRGSEAQAHADYPHNPIDGFMSPTIKPEIPSPASNMVVSPQFVGNALLQQEVQHPQQFHPQQQQKLSLHNSMLNTTNDVLNRLLEEQNFKDTDSDNMSANSVNASRPNTAIGTGTFSSNYLNEEYLMLGDIILHSKPTSPSPSNTSVSEYNTNTVSPNFSSQINYDDLNQPRRKVLQRLKDSRPFISLGFSNESSQLPNLNSSNIAQSSSIPTEYVSPLVTHHLYQSVQDIYTNNIMNFDYPQSYHSLTHFLKKRFSGNNLPAEQKQAKRQSLLVILKLIASYRPTFISAHKSLLKPYDLQFLEMTFQRCLIDYEKLSQLNSSPTIIWRRTGEIVSITDDLLSLLGYNLADLLSHRTFIMELMYDDESITNYFRLFKTVAVGNLHSSIITKIKLTKNQNRNVSDQTGTRRLSYELSERDHIEFCSVWTVKRDMFDLPMMIIGQFLPILPAGDGVRMY.

The zn(2)-C6 fungal-type DNA-binding region spans 20 to 48 (CVFCHEKHLQCSNERPCKNCVKRGLAHEC). Residues 376–445 (DYEKLSQLNS…FRLFKTVAVG (70 aa)) form the PAS domain.

The protein belongs to the ERT1/acuK family.

The protein localises to the nucleus. In terms of biological role, transcription factor which regulates nonfermentable carbon utilization. The polypeptide is Glucose starvation modulator protein 1 (GSM1) (Scheffersomyces stipitis (strain ATCC 58785 / CBS 6054 / NBRC 10063 / NRRL Y-11545) (Yeast)).